Reading from the N-terminus, the 493-residue chain is Cysteine--tRNA ligase (493 aa).

Cysteine 29 lines the Zn(2+) pocket. The 'HIGH' region motif lies at valine 31–histidine 41. Positions 209, 234, and 238 each coordinate Zn(2+). The 'KMSKS' region motif lies at lysine 266 to serine 270. Lysine 269 is a binding site for ATP.

The protein belongs to the class-I aminoacyl-tRNA synthetase family. In terms of assembly, monomer. It depends on Zn(2+) as a cofactor.

It is found in the cytoplasm. It catalyses the reaction tRNA(Cys) + L-cysteine + ATP = L-cysteinyl-tRNA(Cys) + AMP + diphosphate. This is Cysteine--tRNA ligase from Pelobacter propionicus (strain DSM 2379 / NBRC 103807 / OttBd1).